Here is a 587-residue protein sequence, read N- to C-terminus: FAD-dependent monooxygenase ankC (587 aa).

Residues 7-27 (AVDVLIIGAGPAGLIAAMWMA) traverse the membrane as a helical segment. FAD-binding residues include tyrosine 245 and aspartate 311.

The protein belongs to the PheA/TfdB FAD monooxygenase family. In terms of assembly, homodimer. Requires FAD as cofactor.

The protein resides in the membrane. It catalyses the reaction cyclo(L-arginyl-L-dehydrotyrosyl) + AH2 + O2 = cyclo(L-arginyl-(Z)-dehydro-3,4-dihydroxytyrosyl) + A + H2O. It functions in the pathway secondary metabolite biosynthesis. Functionally, FAD-dependent monooxygenase; part of the ank cluster that mediates the biosynthesis of NK13650 C, a highly modified cyclo-arginine-tyrosine dipeptide. AnkC uses as substrate the dehydro-cyclodipeptide intermediate generated by the monooxygase ankB and acts as a hydroxylase that installs the m-OH through a canonical flavin-dependent aromatic hydroxylation mechanism. Within the pathway, the cyclodipeptide synthase ankA acts as the scaffold-generating enzyme and is responsible for formation of the cyclo-Arg-Tyr diketopiperazine (cRY) from L-Arg and L-Tyr. The ankA product cRY is desaturated by the cytochrome P450 monooxygenase ankB to yield a dehydro-cyclodipeptide intermediate. The FAD-dependent monooxygenase ankC then installs the m-OH, ankD catalyzes the attachment of L-homoserine, and ankE ligates citrate to the ankD product to yield NK13650 B. The O-methyltransferase ankF is responsible for methylation of the C-17 phenol group of NK13650 B to produce NK13650 D. Amidation of NK13650 D with L-Asp by ankG then leads to the production of NK13650 C, whereas amidation of NK13650 B produces NK13650 A. The chain is FAD-dependent monooxygenase ankC from Aspergillus thermomutatus (Neosartorya pseudofischeri).